Reading from the N-terminus, the 338-residue chain is N-acetyl-gamma-glutamyl-phosphate reductase (338 aa).

Residue cysteine 148 is part of the active site.

It belongs to the NAGSA dehydrogenase family. Type 1 subfamily.

The protein localises to the cytoplasm. It carries out the reaction N-acetyl-L-glutamate 5-semialdehyde + phosphate + NADP(+) = N-acetyl-L-glutamyl 5-phosphate + NADPH + H(+). Its pathway is amino-acid biosynthesis; L-arginine biosynthesis; N(2)-acetyl-L-ornithine from L-glutamate: step 3/4. Functionally, catalyzes the NADPH-dependent reduction of N-acetyl-5-glutamyl phosphate to yield N-acetyl-L-glutamate 5-semialdehyde. The polypeptide is N-acetyl-gamma-glutamyl-phosphate reductase (Leptospira interrogans serogroup Icterohaemorrhagiae serovar copenhageni (strain Fiocruz L1-130)).